Reading from the N-terminus, the 283-residue chain is Putative ABC transporter ATP-binding protein MA_4342 (283 aa).

The region spanning 3–238 (IILENVSFFY…KNVPLPPVTS (236 aa)) is the ABC transporter domain. ATP is bound at residue 40–47 (GEKGAGKS).

The protein belongs to the ABC transporter superfamily.

The protein resides in the cell membrane. In terms of biological role, probably part of an ABC transporter complex. Responsible for energy coupling to the transport system. This is Putative ABC transporter ATP-binding protein MA_4342 from Methanosarcina acetivorans (strain ATCC 35395 / DSM 2834 / JCM 12185 / C2A).